We begin with the raw amino-acid sequence, 251 residues long: Type III pantothenate kinase (251 aa).

6 to 13 (DCGNSFIK) provides a ligand contact to ATP. Substrate is bound by residues Tyr-93 and 100 to 103 (GLDR). The active-site Proton acceptor is Asp-102. Asp-122 provides a ligand contact to K(+). An ATP-binding site is contributed by Thr-125. Position 182 (Thr-182) interacts with substrate.

This sequence belongs to the type III pantothenate kinase family. In terms of assembly, homodimer. The cofactor is NH4(+). K(+) serves as cofactor.

The protein resides in the cytoplasm. It carries out the reaction (R)-pantothenate + ATP = (R)-4'-phosphopantothenate + ADP + H(+). Its pathway is cofactor biosynthesis; coenzyme A biosynthesis; CoA from (R)-pantothenate: step 1/5. Catalyzes the phosphorylation of pantothenate (Pan), the first step in CoA biosynthesis. In Azotobacter vinelandii (strain DJ / ATCC BAA-1303), this protein is Type III pantothenate kinase.